Here is a 298-residue protein sequence, read N- to C-terminus: GTPase Era (298 aa).

The region spanning 3-170 is the Era-type G domain; sequence KSGFVAILGR…IKLLTDNLEE (168 aa). The G1 stretch occupies residues 11–18; that stretch reads GRPNVGKS. 11–18 serves as a coordination point for GTP; that stretch reads GRPNVGKS. The G2 stretch occupies residues 37-41; sequence QTTRN. The tract at residues 58–61 is G3; the sequence is DTPG. GTP is bound by residues 58-62 and 120-123; these read DTPGI and NKID. A G4 region spans residues 120–123; that stretch reads NKID. The interval 149 to 151 is G5; that stretch reads ISA. Residues 201 to 279 enclose the KH type-2 domain; sequence TQQEVPHSVA…YLETWVKVKK (79 aa).

This sequence belongs to the TRAFAC class TrmE-Era-EngA-EngB-Septin-like GTPase superfamily. Era GTPase family. In terms of assembly, monomer.

It is found in the cytoplasm. The protein resides in the cell membrane. Its function is as follows. An essential GTPase that binds both GDP and GTP, with rapid nucleotide exchange. Plays a role in 16S rRNA processing and 30S ribosomal subunit biogenesis and possibly also in cell cycle regulation and energy metabolism. The chain is GTPase Era from Streptococcus pyogenes serotype M3 (strain ATCC BAA-595 / MGAS315).